A 1062-amino-acid polypeptide reads, in one-letter code: MLQRIREVVSLANNPATDAVTKKQALDYLEQMKSDPNAIQIFCSMLTDSGSDDLCIFVSLQILCDLVAMNTSVDLLFVKNSIVEFLRGKINRNIKDAEFLRNKISELITRLFINMYGEVNGNQWNTFYKDLIALLSIDSLLTGPSEHFSPLGLDYFARICIQINSEVADQTFLRSKDEQTKNNNLKDTMRLEDVQTLVTIWFNCLKSLIIQQQNFELAVIILSCIGAFISWVDITLIVNPEYINIIYGYLDYSDTKIACSQCLCEIISKKMKPVDKLTLLSMLNLTDKVASIGEDDIDVYEKLAKLASSVGLELSIILEQCNEGVQSNETLEVANAADQQVLNQVAPLVLKFMSHEYDSVTEQCFPFISQYLAILKKLFAIGGKPGTAVAINSKRQPLDEAHQNFLVSLLNVCFEKMKIDDSSESNSEEAIEEFNDIVRSKLKVFQDSIAVINPNIYLENISNHIQVSLAGTDWTVLELAIFQMHNLCESIRNNLFGLNKTEISTSAATQLMHKFMALLLQNSNLFQMDNRYVQILFFELVVRHYTFLGSDTKDAVSLLNIFCSEFGMFNKSEKVILRTWYLFTRFVKISKPHLSVSVLSQLVSKVMPLLVIKTVTPSVDGSEDCDTTFDSQLYIFEGVGMLIGANADNTYDILDQVLTPLFTDLERCISLQSQSPSIVLQSHHILMAIGTLARGTHMGLVPENQVNNALVNEKLIHRTLIEKFSNIAEVVLVTFSYFNKHETIRDASRFTFARLIPILNGGIVTFASKLVVLFLESDLKTMEMNDFLGFLGQMVHTFHGDENFYDLFDNLLTPVINKLHILLDHLESESNESNWYGEQNGRENNGNDVSGARTSKTVVVTDSYRDKILLKKAYYGFLQSFVTNNVTSLLLSNRNRSILPTILGDLLSYNPQEIQETSTMKLALNVLVNFIKFFGSGGCTDVNDVHASSIGKLDGLNEYFITRTIPLAFEIPFKPQYKFNINDGSCRVIACDLSRVLKEMYIQSGGGQDVNSNPALKYLTEVYFPQIQLPSELGMELIQMLITQDTKAFEKYYVTLINRLTS.

The protein belongs to the exportin family.

The protein resides in the nucleus. It is found in the cytoplasm. TRNA nucleus export receptor which facilitates tRNA translocation across the nuclear pore complex. Involved in pre-tRNA splicing, probably by affecting the interaction of pre-tRNA with splicing endonuclease. The polypeptide is Exportin-T (LOS1) (Vanderwaltozyma polyspora (strain ATCC 22028 / DSM 70294 / BCRC 21397 / CBS 2163 / NBRC 10782 / NRRL Y-8283 / UCD 57-17) (Kluyveromyces polysporus)).